We begin with the raw amino-acid sequence, 693 residues long: Subtilisin-like protease SBT4.10 (693 aa).

Residues 1-25 (MAKLREASFCALACVLVLFLSFVSA) form the signal peptide. Positions 26-113 (DTYNRQDKQV…VFPSKKYKLH (88 aa)) are cleaved as a propeptide — activation peptide. The region spanning 35–113 (VYVVYMGSLP…VFPSKKYKLH (79 aa)) is the Inhibitor I9 domain. One can recognise a Peptidase S8 domain in the interval 117 to 536 (SWDFMGLKEG…SGHIDPIAAI (420 aa)). Catalysis depends on D145, which acts as the Charge relay system. Residue N176 is glycosylated (N-linked (GlcNAc...) asparagine). H200 functions as the Charge relay system in the catalytic mechanism. N-linked (GlcNAc...) asparagine glycosylation is found at N215, N223, N368, N413, and N467. A PA domain is found at 354–396 (QYPLVYETSVEKCNNESLTTLALSFLTLTPQSNEQIISMFHTL). Catalysis depends on S475, which acts as the Charge relay system. 3 N-linked (GlcNAc...) asparagine glycosylation sites follow: N559, N603, and N613.

Belongs to the peptidase S8 family. Post-translationally, the C-terminal propeptide is autocleaved.

It localises to the secreted. The chain is Subtilisin-like protease SBT4.10 from Arabidopsis thaliana (Mouse-ear cress).